We begin with the raw amino-acid sequence, 123 residues long: Nitrogen regulatory protein GlnK2 (123 aa).

ATP is bound by residues 38 to 40 and Ser49; that span reads SLT. Ser49 is an ADP binding site. An O-UMP-tyrosine modification is found at Tyr62. Residues Val75, 98 to 101, and Arg114 contribute to the ATP site; that span reads GDGK. 98–101 is an ADP binding site; the sequence is GDGK. 98–101 is an AMP binding site; it reads GDGK.

This sequence belongs to the P(II) protein family. In terms of assembly, homotrimer. Interacts with the glutamine synthetase 3 (GS3) in the presence of 2-oxoglutarate. Interacts in vitro with Amt1 after ammonium shock. May also interact with Amt2. In terms of processing, uridylylated on Tyr-62.

The protein localises to the cytoplasm. With respect to regulation, binds the effectors ADP and ATP. Also binds AMP with high affinity, raising the possibility that AMP could be an important PII effector, at least in archaea. The change in the ATP/AMP ratio may be more relevant for describing the energy status in the cells than the ATP/ADP ratio alone. Functionally, involved in the regulation of nitrogen metabolism. Regulates the activity of its targets by protein-protein interaction in response to the nitrogen status of the cell. Increases the activity of the glutamine synthetase 3 in the presence of 2-oxoglutarate. May regulate the activity of the ammonia channel Amt2 via direct interaction. The chain is Nitrogen regulatory protein GlnK2 from Haloferax mediterranei (strain ATCC 33500 / DSM 1411 / JCM 8866 / NBRC 14739 / NCIMB 2177 / R-4) (Halobacterium mediterranei).